The chain runs to 349 residues: Nucleoporin SEH1 (349 aa).

WD repeat units lie at residues 7-46, 53-94, 106-147, 153-192, and 210-253; these read GHDDLVHDVVYDFYGRHVATCSSDQHIKVFKLDKDTSNWE, AHDS…EECS, DSKG…DLRS, EMKVLSIPPANHLQSDFCLSWCPSRFSPEKLAVSALEQAI, and GHKS…SPLA. At Ser-257 the chain carries Phosphoserine. Positions 263-285 are disordered; sequence MFDNSADVDMDAQGRSDSNTEEK. A compositionally biased stretch (basic and acidic residues) spans 274–285; sequence AQGRSDSNTEEK. Residues 302–341 form a WD 6 repeat; it reads DHNGEVWSVSWNLTGTILSSAGDDGKVRLWKATYSNEFKC.

It belongs to the WD repeat SEC13 family. In terms of assembly, component of the nuclear pore complex (NPC). NPC constitutes the exclusive means of nucleocytoplasmic transport. NPCs allow the passive diffusion of ions and small molecules and the active, nuclear transport receptor-mediated bidirectional transport of macromolecules such as proteins, RNAs, ribonucleoparticles (RNPs), and ribosomal subunits across the nuclear envelope. Due to its 8-fold rotational symmetry, all subunits are present with 8 copies or multiples thereof. SEH1 is part of the heptameric 0.5 MDa autoassembling NUP84 NPC subcomplex (NUP84, NUP85, NUP120, NUP133, NUP145C, SEC13 and SEH1). Component of the SEA complex composed of at least IML1/SEA1, RTC1/SEA2, MTC5/SEA3, NPR2, NPR3, SEA4, SEC13 and SEH1.

It is found in the nucleus. The protein localises to the nuclear pore complex. Its subcellular location is the nucleus membrane. The protein resides in the vacuole membrane. Its function is as follows. Functions as a component of the nuclear pore complex (NPC). NPC components, collectively referred to as nucleoporins (NUPs), can play the role of both NPC structural components and of docking or interaction partners for transiently associated nuclear transport factors. Involved in nuclear poly(A)+ RNA export and NPC biogenesis. It is also required for normal nuclear morphology. Component of the SEA complex which coats the vacuolar membrane and is involved in intracellular trafficking, autophagy, response to nitrogen starvation, and amino acid biogenesis. The polypeptide is Nucleoporin SEH1 (SEH1) (Saccharomyces cerevisiae (strain ATCC 204508 / S288c) (Baker's yeast)).